Consider the following 469-residue polypeptide: tRNA-2-methylthio-N(6)-dimethylallyladenosine synthase (469 aa).

An MTTase N-terminal domain is found at arginine 22 to glutamate 142. Residues cysteine 31, cysteine 67, cysteine 105, cysteine 183, cysteine 187, and cysteine 190 each coordinate [4Fe-4S] cluster. In terms of domain architecture, Radical SAM core spans arginine 169–glutamate 401. The TRAM domain occupies glutamate 404–glutamate 466.

Belongs to the methylthiotransferase family. MiaB subfamily. In terms of assembly, monomer. Requires [4Fe-4S] cluster as cofactor.

Its subcellular location is the cytoplasm. It carries out the reaction N(6)-dimethylallyladenosine(37) in tRNA + (sulfur carrier)-SH + AH2 + 2 S-adenosyl-L-methionine = 2-methylsulfanyl-N(6)-dimethylallyladenosine(37) in tRNA + (sulfur carrier)-H + 5'-deoxyadenosine + L-methionine + A + S-adenosyl-L-homocysteine + 2 H(+). Its function is as follows. Catalyzes the methylthiolation of N6-(dimethylallyl)adenosine (i(6)A), leading to the formation of 2-methylthio-N6-(dimethylallyl)adenosine (ms(2)i(6)A) at position 37 in tRNAs that read codons beginning with uridine. This Rhizobium etli (strain ATCC 51251 / DSM 11541 / JCM 21823 / NBRC 15573 / CFN 42) protein is tRNA-2-methylthio-N(6)-dimethylallyladenosine synthase.